Here is a 334-residue protein sequence, read N- to C-terminus: Retinol dehydrogenase 14 (334 aa).

An NADP(+)-binding site is contributed by 51–57; sequence GANSGLG. S190 is a binding site for substrate. Y215 acts as the Proton acceptor in catalysis.

Belongs to the short-chain dehydrogenases/reductases (SDR) family.

The enzyme catalyses all-trans-retinol + NADP(+) = all-trans-retinal + NADPH + H(+). The catalysed reaction is 11-cis-retinol + NADP(+) = 11-cis-retinal + NADPH + H(+). It carries out the reaction 9-cis-retinol + NADP(+) = 9-cis-retinal + NADPH + H(+). Retinol dehydrogenase with a clear preference for NADP. Displays high activity towards 9-cis, 11-cis and all-trans-retinol. Shows a very weak activity towards 13-cis-retinol. Has no activity towards steroids. The polypeptide is Retinol dehydrogenase 14 (Rdh14) (Mus musculus (Mouse)).